Here is a 337-residue protein sequence, read N- to C-terminus: Ketol-acid reductoisomerase (NADP(+)) (337 aa).

One can recognise a KARI N-terminal Rossmann domain in the interval 3–183 (VEMFYDDDAD…GGARAGVIKT (181 aa)). NADP(+) contacts are provided by residues 26–29 (YGSQ), K49, S52, S54, and 84–87 (DTAQ). H109 is an active-site residue. Residue G135 coordinates NADP(+). The region spanning 184–329 (TFKEETETDL…KKLRDLMSWV (146 aa)) is the KARI C-terminal knotted domain. 4 residues coordinate Mg(2+): D192, E196, E228, and E232. Residue S253 coordinates substrate.

This sequence belongs to the ketol-acid reductoisomerase family. Mg(2+) serves as cofactor.

It carries out the reaction (2R)-2,3-dihydroxy-3-methylbutanoate + NADP(+) = (2S)-2-acetolactate + NADPH + H(+). The catalysed reaction is (2R,3R)-2,3-dihydroxy-3-methylpentanoate + NADP(+) = (S)-2-ethyl-2-hydroxy-3-oxobutanoate + NADPH + H(+). The protein operates within amino-acid biosynthesis; L-isoleucine biosynthesis; L-isoleucine from 2-oxobutanoate: step 2/4. Its pathway is amino-acid biosynthesis; L-valine biosynthesis; L-valine from pyruvate: step 2/4. In terms of biological role, involved in the biosynthesis of branched-chain amino acids (BCAA). Catalyzes an alkyl-migration followed by a ketol-acid reduction of (S)-2-acetolactate (S2AL) to yield (R)-2,3-dihydroxy-isovalerate. In the isomerase reaction, S2AL is rearranged via a Mg-dependent methyl migration to produce 3-hydroxy-3-methyl-2-ketobutyrate (HMKB). In the reductase reaction, this 2-ketoacid undergoes a metal-dependent reduction by NADPH to yield (R)-2,3-dihydroxy-isovalerate. This is Ketol-acid reductoisomerase (NADP(+)) from Rhodococcus opacus (strain B4).